We begin with the raw amino-acid sequence, 537 residues long: Immunoglobulin-like domain-containing receptor 1 (537 aa).

Residues 1 to 22 form the signal peptide; that stretch reads MGCGLLAAGLLLFTWLPAGCLS. The Ig-like V-type domain maps to 23-161; the sequence is LLVTVQHTER…TSGDPDKEVK (139 aa). At 23 to 166 the chain is on the extracellular side; it reads LLVTVQHTER…DKEVKLIVLH (144 aa). Cysteine 44 and cysteine 144 are joined by a disulfide. Residues 167–187 form a helical membrane-spanning segment; sequence WLTVIFIILGALLLLLLIGVC. Topologically, residues 188–537 are cytoplasmic; it reads WCQCCPQYCC…SSHSGRSVVI (350 aa). The interval 333–537 is disordered; sequence PPLIRDPPSS…SSHSGRSVVI (205 aa). The segment covering 341-357 has biased composition (polar residues); that stretch reads SSRTSNPSHQQRLNAVS. 2 stretches are compositionally biased toward basic and acidic residues: residues 359 to 380 and 434 to 444; these read RHCDLSERPRQRHHSDFLRELQ and RRPEPREGAQR. Basic residues predominate over residues 480-490; sequence QRRHHHRRRRS. Serine 490 and serine 492 each carry phosphoserine. Residues 518–530 show a composition bias toward basic and acidic residues; it reads GNVERRLERESSH.

It belongs to the immunoglobulin superfamily. LISCH7 family. In terms of assembly, homooligomer. Interacts with MARVELD2 and OCLN; the interaction is required to recruit MARVELD2 to tricellular contacts. Interacts (via C-terminus) with TRA2A, TRA2B and SRSF1. Interacts with PLSCR1. Expressed in the vestibule and in hair cells and supporting cells of the cochlea. Expressed in epithelial tissues. Highly expressed in colon but also detected in small intestine, bladder and lung. In colon, expressed in the upper portion of the crypts (at protein level). Expressed in CCK secretory cells of the proximal small intestine (at protein level). Expressed in the organ of Corti, stria vascularis, utricle and saccule of the inner ear.

It localises to the cell membrane. The protein resides in the cell junction. Its subcellular location is the tight junction. It is found in the nucleus. The protein localises to the cytoplasm. In terms of biological role, maintains epithelial barrier function by recruiting MARVELD2/tricellulin to tricellular tight junctions (tTJs). Crucial for normal hearing by maintaining the structural and functional integrity of tTJs, which are critical for the survival of auditory neurosensory HCs. Mediates fatty acids and lipoproteins-stimulated CCK/cholecystokinin secretion in the small intestine. In the inner ear, may regulate alternative pre-mRNA splicing via binding to TRA2A, TRA2B and SRSF1. The polypeptide is Immunoglobulin-like domain-containing receptor 1 (Mus musculus (Mouse)).